The primary structure comprises 370 residues: Lipoyl synthase, mitochondrial (370 aa).

Residues cysteine 100, cysteine 105, cysteine 111, cysteine 131, cysteine 135, cysteine 138, and serine 346 each contribute to the [4Fe-4S] cluster site. The 220-residue stretch at 116 to 335 (DKSRATATIM…KEVAEKLGFL (220 aa)) folds into the Radical SAM core domain.

It belongs to the radical SAM superfamily. Lipoyl synthase family. Requires [4Fe-4S] cluster as cofactor.

It is found in the mitochondrion. It carries out the reaction [[Fe-S] cluster scaffold protein carrying a second [4Fe-4S](2+) cluster] + N(6)-octanoyl-L-lysyl-[protein] + 2 oxidized [2Fe-2S]-[ferredoxin] + 2 S-adenosyl-L-methionine + 4 H(+) = [[Fe-S] cluster scaffold protein] + N(6)-[(R)-dihydrolipoyl]-L-lysyl-[protein] + 4 Fe(3+) + 2 hydrogen sulfide + 2 5'-deoxyadenosine + 2 L-methionine + 2 reduced [2Fe-2S]-[ferredoxin]. It functions in the pathway protein modification; protein lipoylation via endogenous pathway; protein N(6)-(lipoyl)lysine from octanoyl-[acyl-carrier-protein]: step 2/2. In terms of biological role, catalyzes the radical-mediated insertion of two sulfur atoms into the C-6 and C-8 positions of the octanoyl moiety bound to the lipoyl domains of lipoate-dependent enzymes, thereby converting the octanoylated domains into lipoylated derivatives. The sequence is that of Lipoyl synthase, mitochondrial (lip5) from Schizosaccharomyces pombe (strain 972 / ATCC 24843) (Fission yeast).